The following is a 220-amino-acid chain: 3-dehydroquinate dehydratase (220 aa).

3-dehydroquinate is bound by residues serine 8, 30–32 (ELR), and arginine 63. Histidine 114 acts as the Proton donor/acceptor in catalysis. The Schiff-base intermediate with substrate role is filled by lysine 140. Positions 174 and 197 each coordinate 3-dehydroquinate.

It belongs to the type-I 3-dehydroquinase family. In terms of assembly, homodimer.

The catalysed reaction is 3-dehydroquinate = 3-dehydroshikimate + H2O. It functions in the pathway metabolic intermediate biosynthesis; chorismate biosynthesis; chorismate from D-erythrose 4-phosphate and phosphoenolpyruvate: step 3/7. In terms of biological role, involved in the third step of the chorismate pathway, which leads to the biosynthesis of aromatic amino acids. Catalyzes the cis-dehydration of 3-dehydroquinate (DHQ) and introduces the first double bond of the aromatic ring to yield 3-dehydroshikimate. This is 3-dehydroquinate dehydratase from Saccharolobus solfataricus (strain ATCC 35092 / DSM 1617 / JCM 11322 / P2) (Sulfolobus solfataricus).